A 161-amino-acid polypeptide reads, in one-letter code: Small ribosomal subunit protein uS19 (161 aa).

Basic residues predominate over residues 1–19 (MARQKKYSGKGGARKKNKQ). The interval 1 to 26 (MARQKKYSGKGGARKKNKQKQSVAPR) is disordered.

The protein belongs to the universal ribosomal protein uS19 family.

Protein S19 forms a complex with S13 that binds strongly to the 16S ribosomal RNA. In Methanococcus maripaludis (strain C7 / ATCC BAA-1331), this protein is Small ribosomal subunit protein uS19.